The following is a 145-amino-acid chain: Hemoglobin subunit beta (145 aa).

One can recognise a Globin domain in the interval M1–H145. At T11 the chain carries Phosphothreonine. Residue S43 is modified to Phosphoserine. Residue K58 is modified to N6-acetyllysine. H62 contributes to the heme b binding site. At K81 the chain carries N6-acetyllysine. Position 91 (H91) interacts with heme b. Residue C92 is modified to S-nitrosocysteine.

Belongs to the globin family. Heterotetramer of two alpha chains and two beta chains. In terms of tissue distribution, red blood cells.

Its function is as follows. Involved in oxygen transport from the lung to the various peripheral tissues. In terms of biological role, functions as an endogenous inhibitor of enkephalin-degrading enzymes such as DPP3, and may thereby play a role as a regulator of pain and inflammation. The protein is Hemoglobin subunit beta (HBB) of Bos taurus (Bovine).